Here is a 348-residue protein sequence, read N- to C-terminus: Structural glycoprotein p40 (348 aa).

Belongs to the baculoviridae gp41 family. In terms of processing, O-glycosylated; contains N-acetylglucosamine side chains.

This is Structural glycoprotein p40 (P40) from Bombyx mori nuclear polyhedrosis virus (BmNPV).